We begin with the raw amino-acid sequence, 117 residues long: Fluoride-specific ion channel FluC 2 (117 aa).

2 consecutive transmembrane segments (helical) span residues 1 to 21 and 46 to 66; these read MISIILVMIGGGLGAIARSAI and FLIGLTIGLSISISWFPAFFV. 2 residues coordinate Na(+): Gly-71 and Thr-74. A helical transmembrane segment spans residues 95–115; the sequence is LFLNYSLLQFIIGFIACYIGY.

Belongs to the fluoride channel Fluc/FEX (TC 1.A.43) family.

It is found in the cell membrane. The catalysed reaction is fluoride(in) = fluoride(out). Na(+) is not transported, but it plays an essential structural role and its presence is essential for fluoride channel function. Functionally, fluoride-specific ion channel. Important for reducing fluoride concentration in the cell, thus reducing its toxicity. This Staphylococcus aureus (strain MRSA252) protein is Fluoride-specific ion channel FluC 2.